The chain runs to 304 residues: Dermonecrotic toxin LlSicTox-betaIA1 (304 aa).

The first 21 residues, 1–21 (MLLSAVISFIGFAAFLQEANG), serve as a signal peptide directing secretion. A propeptide spanning residues 22-26 (HVVER) is cleaved from the precursor. His38 is an active-site residue. Mg(2+) is bound by residues Glu58 and Asp60. The active-site Nucleophile is the His74. Disulfide bonds link Cys78-Cys84 and Cys80-Cys223. Mg(2+) is bound at residue Asp118.

It belongs to the arthropod phospholipase D family. Class II subfamily. Class IIb sub-subfamily. It depends on Mg(2+) as a cofactor. As to expression, expressed by the venom gland.

Its subcellular location is the secreted. It catalyses the reaction an N-(acyl)-sphingosylphosphocholine = an N-(acyl)-sphingosyl-1,3-cyclic phosphate + choline. It carries out the reaction an N-(acyl)-sphingosylphosphoethanolamine = an N-(acyl)-sphingosyl-1,3-cyclic phosphate + ethanolamine. The enzyme catalyses a 1-acyl-sn-glycero-3-phosphocholine = a 1-acyl-sn-glycero-2,3-cyclic phosphate + choline. The catalysed reaction is a 1-acyl-sn-glycero-3-phosphoethanolamine = a 1-acyl-sn-glycero-2,3-cyclic phosphate + ethanolamine. Dermonecrotic toxins cleave the phosphodiester linkage between the phosphate and headgroup of certain phospholipids (sphingolipid and lysolipid substrates), forming an alcohol (often choline) and a cyclic phosphate. This toxin acts on sphingomyelin (SM) with low activity. It may also act on ceramide phosphoethanolamine (CPE), lysophosphatidylcholine (LPC) and lysophosphatidylethanolamine (LPE), but not on lysophosphatidylserine (LPS), and lysophosphatidylglycerol (LPG). It acts by transphosphatidylation, releasing exclusively cyclic phosphate products as second products. Induces hemolysis, dermonecrosis, and edema. Also induces platelet aggregation. This chain is Dermonecrotic toxin LlSicTox-betaIA1, found in Loxosceles laeta (South American recluse spider).